Reading from the N-terminus, the 221-residue chain is Protein DEHYDRATION-INDUCED 19 homolog 2 (221 aa).

2 disordered regions span residues 1–24 (MEDD…TAAK) and 162–193 (VLPD…SDSD).

Belongs to the Di19 family. Not phosphorylated in vitro by CPK3 or CPK11. Expressed in seedlings, roots, leaves, stems, flowers and siliques.

It is found in the cytoplasm. It localises to the nucleus. The chain is Protein DEHYDRATION-INDUCED 19 homolog 2 (DI19-2) from Arabidopsis thaliana (Mouse-ear cress).